The chain runs to 430 residues: Glucose-1-phosphate adenylyltransferase (430 aa).

Residues Gly-163, 178–179 (EK), and Ser-210 contribute to the alpha-D-glucose 1-phosphate site.

The protein belongs to the bacterial/plant glucose-1-phosphate adenylyltransferase family. As to quaternary structure, homotetramer.

It catalyses the reaction alpha-D-glucose 1-phosphate + ATP + H(+) = ADP-alpha-D-glucose + diphosphate. The protein operates within glycan biosynthesis; glycogen biosynthesis. In terms of biological role, involved in the biosynthesis of ADP-glucose, a building block required for the elongation reactions to produce glycogen. Catalyzes the reaction between ATP and alpha-D-glucose 1-phosphate (G1P) to produce pyrophosphate and ADP-Glc. The sequence is that of Glucose-1-phosphate adenylyltransferase from Synechococcus elongatus (strain ATCC 33912 / PCC 7942 / FACHB-805) (Anacystis nidulans R2).